Here is a 225-residue protein sequence, read N- to C-terminus: 7-cyano-7-deazaguanine synthase (225 aa).

Residue Val-10–Leu-20 participates in ATP binding. 4 residues coordinate Zn(2+): Cys-189, Cys-199, Cys-202, and Cys-205.

This sequence belongs to the QueC family. Zn(2+) is required as a cofactor.

It carries out the reaction 7-carboxy-7-deazaguanine + NH4(+) + ATP = 7-cyano-7-deazaguanine + ADP + phosphate + H2O + H(+). It functions in the pathway purine metabolism; 7-cyano-7-deazaguanine biosynthesis. Catalyzes the ATP-dependent conversion of 7-carboxy-7-deazaguanine (CDG) to 7-cyano-7-deazaguanine (preQ(0)). This is 7-cyano-7-deazaguanine synthase from Saccharophagus degradans (strain 2-40 / ATCC 43961 / DSM 17024).